The chain runs to 447 residues: Argininosuccinate synthase (447 aa).

ATP contacts are provided by residues 17 to 25 and alanine 43; that span reads AFSGGLDTS. Position 99 (tyrosine 99) interacts with L-citrulline. Glycine 129 and threonine 131 together coordinate ATP. Residues threonine 131, asparagine 135, and aspartate 136 each contribute to the L-aspartate site. Asparagine 135 serves as a coordination point for L-citrulline. Aspartate 136 contributes to the ATP binding site. Positions 139 and 192 each coordinate L-citrulline. Aspartate 194 lines the ATP pocket. L-citrulline contacts are provided by threonine 201, glutamate 203, and glutamate 280.

Belongs to the argininosuccinate synthase family. Type 2 subfamily. As to quaternary structure, homotetramer.

Its subcellular location is the cytoplasm. The enzyme catalyses L-citrulline + L-aspartate + ATP = 2-(N(omega)-L-arginino)succinate + AMP + diphosphate + H(+). The protein operates within amino-acid biosynthesis; L-arginine biosynthesis; L-arginine from L-ornithine and carbamoyl phosphate: step 2/3. The polypeptide is Argininosuccinate synthase (Paracidovorax citrulli (strain AAC00-1) (Acidovorax citrulli)).